Here is a 235-residue protein sequence, read N- to C-terminus: Ribosomal RNA small subunit methyltransferase G (235 aa).

Residues Gly74, Phe79, Glu97–Thr99, Ala125–Glu126, and Arg144 contribute to the S-adenosyl-L-methionine site.

This sequence belongs to the methyltransferase superfamily. RNA methyltransferase RsmG family.

It localises to the cytoplasm. Its function is as follows. Specifically methylates the N7 position of a guanine in 16S rRNA. The chain is Ribosomal RNA small subunit methyltransferase G from Dehalococcoides mccartyi (strain ATCC BAA-2100 / JCM 16839 / KCTC 5957 / BAV1).